Consider the following 338-residue polypeptide: Ketol-acid reductoisomerase (NADP(+)) (338 aa).

The region spanning 1 to 181 (MKVYYDKDCD…GGGRTGIIET (181 aa)) is the KARI N-terminal Rossmann domain. NADP(+) contacts are provided by residues 24 to 27 (YGSQ), arginine 47, serine 50, threonine 52, and 82 to 85 (DEFQ). The active site involves histidine 107. Glycine 133 serves as a coordination point for NADP(+). One can recognise a KARI C-terminal knotted domain in the interval 182-327 (TFKDETETDL…EQLRSMMPWI (146 aa)). 4 residues coordinate Mg(2+): aspartate 190, glutamate 194, glutamate 226, and glutamate 230. Serine 251 contacts substrate.

This sequence belongs to the ketol-acid reductoisomerase family. Requires Mg(2+) as cofactor.

It carries out the reaction (2R)-2,3-dihydroxy-3-methylbutanoate + NADP(+) = (2S)-2-acetolactate + NADPH + H(+). The catalysed reaction is (2R,3R)-2,3-dihydroxy-3-methylpentanoate + NADP(+) = (S)-2-ethyl-2-hydroxy-3-oxobutanoate + NADPH + H(+). It functions in the pathway amino-acid biosynthesis; L-isoleucine biosynthesis; L-isoleucine from 2-oxobutanoate: step 2/4. It participates in amino-acid biosynthesis; L-valine biosynthesis; L-valine from pyruvate: step 2/4. Involved in the biosynthesis of branched-chain amino acids (BCAA). Catalyzes an alkyl-migration followed by a ketol-acid reduction of (S)-2-acetolactate (S2AL) to yield (R)-2,3-dihydroxy-isovalerate. In the isomerase reaction, S2AL is rearranged via a Mg-dependent methyl migration to produce 3-hydroxy-3-methyl-2-ketobutyrate (HMKB). In the reductase reaction, this 2-ketoacid undergoes a metal-dependent reduction by NADPH to yield (R)-2,3-dihydroxy-isovalerate. The protein is Ketol-acid reductoisomerase (NADP(+)) of Pseudomonas fluorescens (strain SBW25).